Consider the following 388-residue polypeptide: MGRARRFQWPLLLLWAAAAGPGTGQEVQTENVTVAEGGVAEITCRLHQYDGSIVVIQNPARQTLFFNGTRALKDERFQLEEFSPRRVRIRLSDARLEDEGGYFCQLYTEDTHHQIATLTVLVAPENPVVEVREQAVEGGEVELSCLVPRSRPAAVLRWYRDRKELKGVSSGQENGKVWSVASTVRFRVDRKDDGGIVICEAQNQALPSGHSKQTQYVLDVQYSPTARIHASQAVVREGDTLVLTCAVTGNPRPNQIRWNRGNESLPERAEAVGETLTLPGLVSADNGTYTCEAANKHGHARALYVLVVYDPGAVVEAQTSVPYAIVGGILALLVFLIICVLVGMVWCSVRQKGSYLTHEASGLDEQGEAREAFLNGGDGHKRKEEFFI.

Residues 1-20 form the signal peptide; the sequence is MGRARRFQWPLLLLWAAAAG. Residues 21–119 form the Ig-like V-type domain; sequence PGTGQEVQTE…DTHHQIATLT (99 aa). Residues 25–324 are Extracellular-facing; the sequence is QEVQTENVTV…VEAQTSVPYA (300 aa). N-linked (GlcNAc...) asparagine glycans are attached at residues Asn-31 and Asn-67. Cystine bridges form between Cys-44–Cys-104, Cys-145–Cys-199, and Cys-245–Cys-291. Ig-like C2-type domains are found at residues 124 to 219 and 224 to 307; these read PENP…YVLD and PTAR…YVLV. N-linked (GlcNAc...) asparagine glycosylation is present at Asn-286. The helical transmembrane segment at 325 to 345 threads the bilayer; sequence IVGGILALLVFLIICVLVGMV. Topologically, residues 346 to 388 are cytoplasmic; it reads WCSVRQKGSYLTHEASGLDEQGEAREAFLNGGDGHKRKEEFFI. A Phosphoserine modification is found at Ser-361.

It belongs to the nectin family. In terms of assembly, monomer and homodimer. N-glycosylated. Expressed in the brain and several organs including the kidney and liver.

The protein localises to the membrane. Its function is as follows. Involved in the cell-cell adhesion. Has calcium- and magnesium-independent cell-cell adhesion activity. May have tumor-suppressor activity. This Mus musculus (Mouse) protein is Cell adhesion molecule 4 (Cadm4).